Here is a 415-residue protein sequence, read N- to C-terminus: Dynein assembly factor with WD repeat domains 1 (415 aa).

WD repeat units lie at residues 90–129 (AHIL…ELHT), 132–174 (GHRN…HTFR), 175–214 (GHTA…EVVT), 217–256 (GHLA…KVHT), 259–298 (GHCA…CVAT), 301–340 (GHDD…CITK), 343–384 (GHEG…QVLE), and 386–415 (HTDE…RIWR).

Belongs to the WD repeat WDR69 family. As to quaternary structure, interacts with IFT46.

It is found in the cytoplasm. It localises to the cytoskeleton. The protein resides in the flagellum basal body. Its subcellular location is the flagellum axoneme. Required for axonemal dynein assembly and ciliary motility in ciliated organs, including Kupffer's vesicle, during embryogenesis. Facilitates the onset of robust cilia motility during development. In Rattus norvegicus (Rat), this protein is Dynein assembly factor with WD repeat domains 1 (Daw1).